The sequence spans 564 residues: Septation ring formation regulator EzrA (564 aa).

Residues 1 to 4 (MVLY) lie on the Extracellular side of the membrane. The chain crosses the membrane as a helical span at residues 5 to 23 (IILAIIVIILIAVGVLFYL). Residues 24 to 564 (RSNKRQIIEK…KHIEEEVIKQ (541 aa)) lie on the Cytoplasmic side of the membrane. Coiled-coil stretches lie at residues 99–138 (SFNASQSEIDDANELMDSYEQSYQQQLEDVNEIIALYKDN), 190–223 (DGNYVQAHNHIAALNEQMKQLRSYMEEIPELIRE), 271–300 (LISRLELEEANDKLANINDKLDDMYDLIEH), 350–435 (VRQF…RRLL), and 471–550 (VKQL…ESVE).

The protein belongs to the EzrA family.

It localises to the cell membrane. Its function is as follows. Negative regulator of FtsZ ring formation; modulates the frequency and position of FtsZ ring formation. Inhibits FtsZ ring formation at polar sites. Interacts either with FtsZ or with one of its binding partners to promote depolymerization. The protein is Septation ring formation regulator EzrA of Staphylococcus aureus (strain NCTC 8325 / PS 47).